A 235-amino-acid polypeptide reads, in one-letter code: 2-C-methyl-D-erythritol 4-phosphate cytidylyltransferase (235 aa).

Belongs to the IspD/TarI cytidylyltransferase family. IspD subfamily.

It carries out the reaction 2-C-methyl-D-erythritol 4-phosphate + CTP + H(+) = 4-CDP-2-C-methyl-D-erythritol + diphosphate. It functions in the pathway isoprenoid biosynthesis; isopentenyl diphosphate biosynthesis via DXP pathway; isopentenyl diphosphate from 1-deoxy-D-xylulose 5-phosphate: step 2/6. Functionally, catalyzes the formation of 4-diphosphocytidyl-2-C-methyl-D-erythritol from CTP and 2-C-methyl-D-erythritol 4-phosphate (MEP). In Synechococcus sp. (strain JA-3-3Ab) (Cyanobacteria bacterium Yellowstone A-Prime), this protein is 2-C-methyl-D-erythritol 4-phosphate cytidylyltransferase.